A 366-amino-acid chain; its full sequence is Chorismate synthase (366 aa).

Positions 48 and 54 each coordinate NADP(+). FMN is bound by residues 125–127 (RSS), 238–239 (NA), Gly278, 293–297 (KPTSS), and Arg319.

This sequence belongs to the chorismate synthase family. Homotetramer. FMNH2 serves as cofactor.

It catalyses the reaction 5-O-(1-carboxyvinyl)-3-phosphoshikimate = chorismate + phosphate. Its pathway is metabolic intermediate biosynthesis; chorismate biosynthesis; chorismate from D-erythrose 4-phosphate and phosphoenolpyruvate: step 7/7. In terms of biological role, catalyzes the anti-1,4-elimination of the C-3 phosphate and the C-6 proR hydrogen from 5-enolpyruvylshikimate-3-phosphate (EPSP) to yield chorismate, which is the branch point compound that serves as the starting substrate for the three terminal pathways of aromatic amino acid biosynthesis. This reaction introduces a second double bond into the aromatic ring system. This chain is Chorismate synthase, found in Neisseria meningitidis serogroup A / serotype 4A (strain DSM 15465 / Z2491).